Here is a 204-residue protein sequence, read N- to C-terminus: MKEIVIATKNAGKVREFAALFAKRGVEVKSLLDFPDAPDVAETGSTFAENAVLKAEAASRRLKRPVIADDSGLVVDALGGRPGVHSARYAGEDKNDARNIAKLLRELDGVPMEQRTARFHCALAVAIPGRPTAVVEATCDGYIAEAPRGEGGFGYDPVFYLPERGKTMAELAPEEKNQISHRAKALTKLDEQWEEIVGGKGRTE.

Substrate is bound at residue 8–13 (TKNAGK). Asp-70 functions as the Proton acceptor in the catalytic mechanism. Asp-70 contributes to the Mg(2+) binding site. Residues Ser-71, 153 to 156 (FGYD), Lys-176, and 181 to 182 (HR) each bind substrate.

This sequence belongs to the HAM1 NTPase family. As to quaternary structure, homodimer. The cofactor is Mg(2+).

The enzyme catalyses XTP + H2O = XMP + diphosphate + H(+). It catalyses the reaction dITP + H2O = dIMP + diphosphate + H(+). It carries out the reaction ITP + H2O = IMP + diphosphate + H(+). Functionally, pyrophosphatase that catalyzes the hydrolysis of nucleoside triphosphates to their monophosphate derivatives, with a high preference for the non-canonical purine nucleotides XTP (xanthosine triphosphate), dITP (deoxyinosine triphosphate) and ITP. Seems to function as a house-cleaning enzyme that removes non-canonical purine nucleotides from the nucleotide pool, thus preventing their incorporation into DNA/RNA and avoiding chromosomal lesions. This Geobacillus kaustophilus (strain HTA426) protein is dITP/XTP pyrophosphatase.